Consider the following 645-residue polypeptide: MRSTQKTLALWFFLIIMAVFLFQAYESKQQKAIADFNFSKFTEAVKAGEVATVTFRQDTSEVVGEMKPEFEKKYNGTHFSIVGNTQDEGYKFLQQHGITPNYERADNGGFFQSLLVNWLPLILIVAMFLFIMRQIQAGGGKAMSFGKSRARLLTEHKNRVTFKEVAGVDEAKEDLQEIVSFLKDPKKYTKLGGRIPKGVLLVGSPGTGKTLLARAVAGEAGVPFFTISGSDFVEMFVGVGASRVRDLFEQGKKNAPCLIFIDEIDAVGRHRGAGMGGGHDEREQTLNQLLVEMDGFESSEGVIMIAATNRPDVLDPALLRPGRFDRRVIVNKPDLKGREQILAVHMRKTPLGPDVDASKIARGTPGFSGADLENLVNEAALVAARSDKKYLEMEDFEKAKDKVTMGAERRSMVISDEDKKVTAYHEAGHTLVGKKLVGLDPIHKVTIIPRGMALGVTQTLPEKESVSLSKSKAENMIAFLFGGRAAEELIFKDITTGAGNDIERATEIARRMVCEWGMSKLGPLAYETRDNPVFMGMGYGNKSKEYSDAKAQEIDTEVEKIIKHGYDISIQILRDHQDALERLTQALLEYETIDGHEVDMLVNGAAVAEIEKYRNAKKDSNAAIMNAAEKKGSGDPVGNTGPVTI.

Residues 1 to 6 (MRSTQK) are Cytoplasmic-facing. Residues 7–27 (TLALWFFLIIMAVFLFQAYES) traverse the membrane as a helical segment. Topologically, residues 28–110 (KQQKAIADFN…NYERADNGGF (83 aa)) are periplasmic. The chain crosses the membrane as a helical span at residues 111 to 131 (FQSLLVNWLPLILIVAMFLFI). Topologically, residues 132-645 (MRQIQAGGGK…PVGNTGPVTI (514 aa)) are cytoplasmic. 203-210 (GSPGTGKT) is a binding site for ATP. His425 is a binding site for Zn(2+). Residue Glu426 is part of the active site. Residues His429 and Asp501 each coordinate Zn(2+).

In the central section; belongs to the AAA ATPase family. It in the C-terminal section; belongs to the peptidase M41 family. In terms of assembly, homohexamer. The cofactor is Zn(2+).

Its subcellular location is the cell inner membrane. Acts as a processive, ATP-dependent zinc metallopeptidase for both cytoplasmic and membrane proteins. Plays a role in the quality control of integral membrane proteins. This is ATP-dependent zinc metalloprotease FtsH 1 from Bdellovibrio bacteriovorus (strain ATCC 15356 / DSM 50701 / NCIMB 9529 / HD100).